Here is a 286-residue protein sequence, read N- to C-terminus: 2-hydroxy-6-oxo-6-phenylhexa-2,4-dienoate hydrolase (286 aa).

Substrate contacts are provided by residues 42 to 43, asparagine 51, asparagine 111, serine 180, and arginine 190; that span reads GG. Histidine 265 serves as the catalytic Proton acceptor. Position 266 (tryptophan 266) interacts with substrate.

It belongs to the AB hydrolase superfamily. BphD family. Homodimer.

The enzyme catalyses 2,6-dioxo-6-phenylhexa-3-enoate + H2O = 2-oxopent-4-enoate + benzoate + H(+). Its pathway is xenobiotic degradation; biphenyl degradation; 2-hydroxy-2,4-pentadienoate and benzoate from biphenyl: step 4/4. Its function is as follows. Catalyzes an unusual C-C bond hydrolysis of 2-hydroxy-6-oxo-6-phenylhexa-2,4-dienoic acid (HOPDA) to produce benzoic acid and 2-hydroxy-2,4-pentadienoic acid (HPD). The polypeptide is 2-hydroxy-6-oxo-6-phenylhexa-2,4-dienoate hydrolase (Polaromonas naphthalenivorans (strain CJ2)).